Here is a 711-residue protein sequence, read N- to C-terminus: Choline transporter-like protein 2 (711 aa).

The Cytoplasmic portion of the chain corresponds to 1–33 (MGDERPHYYGKHGTPQKYDPTFKGPIYNRGCTD). Phosphothreonine is present on Thr-14. The chain crosses the membrane as a helical span at residues 34-54 (VICCVFLLVAIVGYVAVGIIA). The Extracellular segment spans residues 55–232 (WTHGDPRKVI…RIFEDYTVSW (178 aa)). N-linked (GlcNAc...) asparagine glycans are attached at residues Asn-187 and Asn-200. A helical membrane pass occupies residues 233-253 (YWIIIGLVIAMAMSLLFIILL). Residues 254–256 (RFL) are Cytoplasmic-facing. Residues 257-277 (AGIMVWVMIIMVILVLGYGIF) traverse the membrane as a helical segment. The Extracellular segment spans residues 278-315 (HCYMEYSRLRGEAGSDVSLVDLGFQTDFRVYLHLRQTW). The chain crosses the membrane as a helical span at residues 316–336 (LAFMIILSILEVIIILLLIFL). Residues 337-364 (RKRILIAIALIKEASRAVGYVMCTMLYP) are Cytoplasmic-facing. The helical transmembrane segment at 365–385 (LVTFFLLCLCIAYWASTAVFL) threads the bilayer. The Extracellular segment spans residues 386–440 (STSNEAVYKIFDDGLCPFTAKTCNPETFPSSNESRQCPNARCQFAFYGGESGYHR). Asn-417 carries an N-linked (GlcNAc...) asparagine glycan. The helical transmembrane segment at 441–461 (ALLGLQIFNAFMFFWLANFVL) threads the bilayer. The Cytoplasmic portion of the chain corresponds to 462–504 (ALGQVTLAGAFASYYWALRKPDDLPAFPLFSAFGRALRYHTGS). Residues 505 to 525 (LAFGALILAIVQIIRVILEYL) form a helical membrane-spanning segment. The Extracellular portion of the chain corresponds to 526-563 (DQRLKAAENKFAKCLMTCLKCCFWCLEKFIKFLNRNAY). The helical transmembrane segment at 564 to 584 (IMIAIYGTNFCTSARNAFFLL) threads the bilayer. Residues 585 to 599 (MRNIIRVAVLDKVTD) lie on the Cytoplasmic side of the membrane. Residues 600–620 (FLFLLGKLLIVGSVGILAFFF) form a helical membrane-spanning segment. Residues 621 to 638 (FTHRIRIVQDTAPPLNYY) are Extracellular-facing. The helical transmembrane segment at 639 to 659 (WVPILTVIVGSYLIAHGFFSV) threads the bilayer. Topologically, residues 660–711 (YGMCVDTLFLCFCEDLERNDGSQERPYFMSPELRDILLKGSAEEGKRAEAEE) are cytoplasmic.

This sequence belongs to the CTL (choline transporter-like) family. Interacts with COCH. N-glycosylated.

The protein resides in the cell membrane. It localises to the mitochondrion outer membrane. It carries out the reaction choline(out) + n H(+)(in) = choline(in) + n H(+)(out). The enzyme catalyses ethanolamine(out) + n H(+)(in) = ethanolamine(in) + n H(+)(out). Choline/H+ antiporter, mainly in mitochodria. Also acts as a low-affinity ethanolamine/H+ antiporter, regulating the supply of extracellular ethanolamine (Etn) for the CDP-Etn pathway, redistribute intracellular Etn and balance the CDP-Cho and CDP-Etn arms of the Kennedy pathway. This Pongo abelii (Sumatran orangutan) protein is Choline transporter-like protein 2 (SLC44A2).